The primary structure comprises 205 residues: Macrophage immunometabolism regulator (205 aa).

A disordered region spans residues 1–40 (MEVDINGVNRTNNSVPSTTEGSSPSKPDPEKPRCSSTPCS). Over residues 8 to 25 (VNRTNNSVPSTTEGSSPS) the composition is skewed to polar residues.

Belongs to the UNC119-binding protein family. Interacts with unc119 family proteins; interaction preferentially takes place when unc119 proteins are unliganded with myristoylated proteins.

It localises to the cytoplasm. The protein resides in the cell projection. It is found in the cilium. Its function is as follows. May play a role in immune regulation through regulation of the macrophage function. May also play a role in trafficking of proteins via its interaction with unc119 family cargo adapters. May play a role in ciliary membrane localization. In Xenopus tropicalis (Western clawed frog), this protein is Macrophage immunometabolism regulator (macir).